The following is a 55-amino-acid chain: Large ribosomal subunit protein bL33 (55 aa).

The protein belongs to the bacterial ribosomal protein bL33 family.

The sequence is that of Large ribosomal subunit protein bL33 from Vibrio atlanticus (strain LGP32) (Vibrio splendidus (strain Mel32)).